The primary structure comprises 729 residues: MLYKGDTLYLDWLEDGIAELVFDAPGSVNKLDTATVASLGQALEVLEKQHDLKGLLLRSNKAAFIVGADITEFLSLFLVPEEQLSQWLHFANSVFNRLEDLPVPTLAAVNGYALGGGCECVLATDYRLATPDLRIGLPETKLGIMPGFGGSVRLPRMLGADSALEIIAAGKDVGAEHALKIGLVDGVVKQETLIEGAIAVLRQAITGDLDWRAKRQPKLEPLKLSKIEAAMSFTIAKGMVAQTAGKHYPAPMTAVKTIEAAARFGREEALNLENKSFVPLAHTNEARALVGIFLNDQYVKGKAKKLTKDIETPKQAAVLGAGIMGGGIAYQSAWKGVPVIMKDINDKSLNLGMTEAAKLLNKQLERGKIDGLKLAGVISTIHPTLDYAGFDRVDVVVEAVVENPKVKKAVLAETEQKVRPETVLASNTSTIPIGELASALEHPENFCGMHFFNPVHRMPLVEIIRGEKSSDETIAKVVAWASKMGKTPIVVNDCPGFFVNRVLFPYFAGFSQLLRDGADFRKVDKVMEKQFGWPMGPAYLLDVVGIDTAHHAQAVMAAGFPQRMQKEYRDAIDALFDASRFGQKNGLGFWRYKEDSKGKPKKEEDAAVDDLLASVSQPKHDFSDDEIIARMMIPMINEVVRCLEEGIIASPAEADMALVYGLGFPPFHGGAFRWLDTQGSAKYLDMAQQYQHLGPLYEVPEGLRNKARHNEPYYPPVEPARPVGSLKTA.

The enoyl-CoA hydratase/isomerase stretch occupies residues 1–189; the sequence is MLYKGDTLYL…KIGLVDGVVK (189 aa). Aspartate 296 lines the substrate pocket. Positions 311–729 are 3-hydroxyacyl-CoA dehydrogenase; it reads ETPKQAAVLG…ARPVGSLKTA (419 aa). NAD(+) contacts are provided by residues methionine 324, aspartate 343, 400–402, lysine 407, and serine 429; that span reads VVE. Residue histidine 450 is the For 3-hydroxyacyl-CoA dehydrogenase activity of the active site. Residue asparagine 453 participates in NAD(+) binding. Substrate-binding residues include asparagine 500 and tyrosine 660. The interval 708–729 is disordered; sequence RHNEPYYPPVEPARPVGSLKTA.

The protein in the N-terminal section; belongs to the enoyl-CoA hydratase/isomerase family. It in the C-terminal section; belongs to the 3-hydroxyacyl-CoA dehydrogenase family. Heterotetramer of two alpha chains (FadB) and two beta chains (FadA).

The catalysed reaction is a (3S)-3-hydroxyacyl-CoA + NAD(+) = a 3-oxoacyl-CoA + NADH + H(+). The enzyme catalyses a (3S)-3-hydroxyacyl-CoA = a (2E)-enoyl-CoA + H2O. It carries out the reaction a 4-saturated-(3S)-3-hydroxyacyl-CoA = a (3E)-enoyl-CoA + H2O. It catalyses the reaction (3S)-3-hydroxybutanoyl-CoA = (3R)-3-hydroxybutanoyl-CoA. The catalysed reaction is a (3Z)-enoyl-CoA = a 4-saturated (2E)-enoyl-CoA. The enzyme catalyses a (3E)-enoyl-CoA = a 4-saturated (2E)-enoyl-CoA. The protein operates within lipid metabolism; fatty acid beta-oxidation. Its function is as follows. Involved in the aerobic and anaerobic degradation of long-chain fatty acids via beta-oxidation cycle. Catalyzes the formation of 3-oxoacyl-CoA from enoyl-CoA via L-3-hydroxyacyl-CoA. It can also use D-3-hydroxyacyl-CoA and cis-3-enoyl-CoA as substrate. In Salmonella newport (strain SL254), this protein is Fatty acid oxidation complex subunit alpha.